The primary structure comprises 694 residues: Methionine--tRNA ligase (694 aa).

The 'HIGH' region signature appears at 12–22; sequence PYANGPLHLGH. Cysteine 143, cysteine 146, cysteine 156, and cysteine 159 together coordinate Zn(2+). The 'KMSKS' region motif lies at 330 to 334; that stretch reads KMSKS. Lysine 333 is a binding site for ATP. The interval 552–577 is disordered; that stretch reads APAAPAATTKPAPSKADAAPAAVANP. The 104-residue stretch at 591–694 folds into the tRNA-binding domain; sequence DFAKLDLRIG…AGAQPGMPVR (104 aa).

The protein belongs to the class-I aminoacyl-tRNA synthetase family. MetG type 1 subfamily. As to quaternary structure, homodimer. It depends on Zn(2+) as a cofactor.

It is found in the cytoplasm. It catalyses the reaction tRNA(Met) + L-methionine + ATP = L-methionyl-tRNA(Met) + AMP + diphosphate. Its function is as follows. Is required not only for elongation of protein synthesis but also for the initiation of all mRNA translation through initiator tRNA(fMet) aminoacylation. The polypeptide is Methionine--tRNA ligase (Xanthomonas campestris pv. campestris (strain B100)).